A 388-amino-acid polypeptide reads, in one-letter code: Pyruvate dehydrogenase E1 component subunit alpha, testis-specific form, mitochondrial (388 aa).

The transit peptide at 1–27 (MLAAFISRVLRRVAQKSARRVLVASRN) directs the protein to the mitochondrion. Pyruvate-binding residues include histidine 90, tyrosine 116, arginine 117, glycine 163, valine 165, aspartate 194, glycine 195, alanine 196, asparagine 223, and tyrosine 225. Thiamine diphosphate is bound by residues tyrosine 116, arginine 117, glycine 163, valine 165, aspartate 194, glycine 195, alanine 196, and asparagine 223. Aspartate 194 contributes to the Mg(2+) binding site. Residues asparagine 223 and tyrosine 225 each coordinate Mg(2+). Histidine 290 provides a ligand contact to thiamine diphosphate. A Phosphoserine; by PDK1, PDK2, PDK3 and PDK4 modification is found at serine 291. The residue at position 293 (serine 293) is a Phosphoserine. Serine 298 is subject to Phosphoserine; by PDK3.

In terms of assembly, heterotetramer of two PDHA2 and two PDHB subunits. The heterotetramer interacts with DLAT, and is part of the multimeric pyruvate dehydrogenase complex that contains multiple copies of pyruvate dehydrogenase (E1), dihydrolipoamide acetyltransferase (DLAT, E2) and lipoamide dehydrogenase (DLD, E3). These subunits are bound to an inner core composed of about 48 DLAT and 12 PDHX molecules. It depends on thiamine diphosphate as a cofactor. Mg(2+) is required as a cofactor. Phosphorylation at Ser-291, Ser-293 and Ser-298 by PDK family kinases inactivates the enzyme; for this phosphorylation at a single site is sufficient. Phosphorylation at Ser-293 interferes with access to active site, and thereby inactivates the enzyme. Dephosphorylation at all three sites, i.e. at Ser-291, Ser-293 and Ser-298, is required for reactivation. As to expression, testis. Expressed in postmeiotic spermatogenic cells.

The protein localises to the mitochondrion matrix. It carries out the reaction N(6)-[(R)-lipoyl]-L-lysyl-[protein] + pyruvate + H(+) = N(6)-[(R)-S(8)-acetyldihydrolipoyl]-L-lysyl-[protein] + CO2. Its activity is regulated as follows. Pyruvate dehydrogenase activity is inhibited by phosphorylation of PDHA2; it is reactivated by dephosphorylation. The pyruvate dehydrogenase complex catalyzes the overall conversion of pyruvate to acetyl-CoA and CO(2), and thereby links the glycolytic pathway to the tricarboxylic cycle. The protein is Pyruvate dehydrogenase E1 component subunit alpha, testis-specific form, mitochondrial (PDHA2) of Homo sapiens (Human).